The following is a 225-amino-acid chain: PKHD-type hydroxylase YbiX (225 aa).

Positions T78–S177 constitute a Fe2OG dioxygenase domain. Fe cation is bound by residues H96, D98, and H158. R168 serves as a coordination point for 2-oxoglutarate.

It depends on Fe(2+) as a cofactor. L-ascorbate serves as cofactor.

The polypeptide is PKHD-type hydroxylase YbiX (Shigella boydii serotype 4 (strain Sb227)).